A 501-amino-acid polypeptide reads, in one-letter code: Probable pectate lyase 13 (501 aa).

An N-terminal signal peptide occupies residues 1 to 22 (MLLQNFSNTIFLLCLFFTLLSA). N27 and N49 each carry an N-linked (GlcNAc...) asparagine glycan. A disordered region spans residues 55–78 (RQLSSPSSSSSSSSSSSSSSCRTG). Residues 58–74 (SSPSSSSSSSSSSSSSS) are compositionally biased toward low complexity. Residues D217, D241, and D245 each contribute to the Ca(2+) site. The active site involves R297. Disordered stretches follow at residues 329-359 (INSQ…DGEW) and 408-463 (NAGV…SSGD). Residues 343 to 357 (SAKEVTKRVDSKDDG) show a composition bias toward basic and acidic residues. The segment covering 430–449 (GGDGGGGGSSGGSSGGGMDV) has biased composition (gly residues). The segment covering 450–463 (MGGTTRGSSSSSGD) has biased composition (low complexity). Residue S474 is the site of GPI-anchor amidated serine attachment. Residues 475 to 501 (DAPSRPRLTLLFSLLMISVLSLSTLLL) constitute a propeptide, removed in mature form.

It belongs to the polysaccharide lyase 1 family. Ca(2+) is required as a cofactor. In terms of tissue distribution, expressed equally in mature leaves, buds, flowers, rosettes and roots.

The protein resides in the cell membrane. The enzyme catalyses Eliminative cleavage of (1-&gt;4)-alpha-D-galacturonan to give oligosaccharides with 4-deoxy-alpha-D-galact-4-enuronosyl groups at their non-reducing ends.. Its pathway is glycan metabolism; pectin degradation; 2-dehydro-3-deoxy-D-gluconate from pectin: step 2/5. Its function is as follows. Susceptibility factor required for infection by most powdery mildews, but not by unrelated pathogens. Exact function not known, but clearly affects cell wall composition. This chain is Probable pectate lyase 13 (PMR6), found in Arabidopsis thaliana (Mouse-ear cress).